Here is a 203-residue protein sequence, read N- to C-terminus: Amelogenin, Y isoform (203 aa).

The first 16 residues, 1-16 (MGTWILFACLVGAAFA), serve as a signal peptide directing secretion. The tract at residues 116–180 (MPVPGQQSMT…PPLPPMFPMR (65 aa)) is disordered. The span at 120-130 (GQQSMTPTQHH) shows a compositional bias: polar residues. Low complexity predominate over residues 131 to 142 (QPNLPLPAQQPF). The span at 143–180 (QPQPVQPLPHQPMQPQPPVQPMQPLLPQPPLPPMFPMR) shows a compositional bias: pro residues.

Belongs to the amelogenin family.

Its subcellular location is the secreted. It is found in the extracellular space. The protein resides in the extracellular matrix. Its function is as follows. Plays a role in biomineralization. Seems to regulate the formation of crystallites during the secretory stage of tooth enamel development. Thought to play a major role in the structural organization and mineralization of developing enamel. This Pan troglodytes (Chimpanzee) protein is Amelogenin, Y isoform (AMELY).